Consider the following 386-residue polypeptide: Succinate--CoA ligase [ADP-forming] subunit beta (386 aa).

One can recognise an ATP-grasp domain in the interval 9–244; that stretch reads KELLKQFGVP…LDEEDPAEIE (236 aa). ATP-binding positions include Lys46, 53-55, Glu99, Ala102, and Glu107; that span reads GRG. Mg(2+)-binding residues include Asn199 and Asp213. Residues Asn264 and 321–323 contribute to the substrate site; that span reads GIM.

It belongs to the succinate/malate CoA ligase beta subunit family. Heterotetramer of two alpha and two beta subunits. The cofactor is Mg(2+).

It carries out the reaction succinate + ATP + CoA = succinyl-CoA + ADP + phosphate. The enzyme catalyses GTP + succinate + CoA = succinyl-CoA + GDP + phosphate. It participates in carbohydrate metabolism; tricarboxylic acid cycle; succinate from succinyl-CoA (ligase route): step 1/1. Succinyl-CoA synthetase functions in the citric acid cycle (TCA), coupling the hydrolysis of succinyl-CoA to the synthesis of either ATP or GTP and thus represents the only step of substrate-level phosphorylation in the TCA. The beta subunit provides nucleotide specificity of the enzyme and binds the substrate succinate, while the binding sites for coenzyme A and phosphate are found in the alpha subunit. This chain is Succinate--CoA ligase [ADP-forming] subunit beta, found in Bordetella avium (strain 197N).